Consider the following 335-residue polypeptide: Phosphate acyltransferase (335 aa).

This sequence belongs to the PlsX family. In terms of assembly, homodimer. Probably interacts with PlsY.

The protein resides in the cytoplasm. The catalysed reaction is a fatty acyl-[ACP] + phosphate = an acyl phosphate + holo-[ACP]. It functions in the pathway lipid metabolism; phospholipid metabolism. In terms of biological role, catalyzes the reversible formation of acyl-phosphate (acyl-PO(4)) from acyl-[acyl-carrier-protein] (acyl-ACP). This enzyme utilizes acyl-ACP as fatty acyl donor, but not acyl-CoA. In Streptococcus pyogenes serotype M28 (strain MGAS6180), this protein is Phosphate acyltransferase.